The following is a 163-amino-acid chain: Urease accessory protein UreE (163 aa).

Positions 130-163 (PFEPEPGAYGGGHGHTHSHDHSHQHDPAGHAHEH) are disordered. The span at 146–163 (HSHDHSHQHDPAGHAHEH) shows a compositional bias: basic and acidic residues.

The protein belongs to the UreE family.

It localises to the cytoplasm. In terms of biological role, involved in urease metallocenter assembly. Binds nickel. Probably functions as a nickel donor during metallocenter assembly. The sequence is that of Urease accessory protein UreE from Alkalilimnicola ehrlichii (strain ATCC BAA-1101 / DSM 17681 / MLHE-1).